The following is a 141-amino-acid chain: Nucleoside diphosphate kinase (141 aa).

ATP is bound by residues K11, F59, R87, T93, R104, and N114. The active-site Pros-phosphohistidine intermediate is the H117.

It belongs to the NDK family. In terms of assembly, homotetramer. Requires Mg(2+) as cofactor.

It is found in the cytoplasm. The catalysed reaction is a 2'-deoxyribonucleoside 5'-diphosphate + ATP = a 2'-deoxyribonucleoside 5'-triphosphate + ADP. It carries out the reaction a ribonucleoside 5'-diphosphate + ATP = a ribonucleoside 5'-triphosphate + ADP. Its function is as follows. Major role in the synthesis of nucleoside triphosphates other than ATP. The ATP gamma phosphate is transferred to the NDP beta phosphate via a ping-pong mechanism, using a phosphorylated active-site intermediate. The chain is Nucleoside diphosphate kinase from Acidovorax sp. (strain JS42).